The sequence spans 468 residues: Glutamine synthetase (468 aa).

The GS beta-grasp domain occupies 13 to 97 (NEVKFVDLRF…IRCDILEPAT (85 aa)). One can recognise a GS catalytic domain in the interval 105 to 468 (PRSIAKRAED…PVEFELYYSV (364 aa)). Mg(2+) is bound by residues Glu-130 and Glu-132. Residue Glu-208 coordinates ATP. Mg(2+) is bound by residues Glu-213 and Glu-220. L-glutamate contacts are provided by residues 264–265 (NG) and Gly-265. Residue His-269 coordinates Mg(2+). Residues 271-273 (HQS) and Ser-273 each bind ATP. Residues Arg-321, Glu-327, and Arg-339 each coordinate L-glutamate. 3 residues coordinate ATP: Arg-339, Arg-344, and Lys-352. Position 357 (Glu-357) interacts with Mg(2+). L-glutamate is bound at residue Arg-359. Tyr-397 bears the O-AMP-tyrosine mark.

The protein belongs to the glutamine synthetase family. Oligomer of 12 subunits arranged in the form of two hexameric ring. Requires Mg(2+) as cofactor.

It is found in the cytoplasm. The catalysed reaction is L-glutamate + NH4(+) + ATP = L-glutamine + ADP + phosphate + H(+). With respect to regulation, the activity of this enzyme could be controlled by adenylation under conditions of abundant glutamine. In terms of biological role, catalyzes the ATP-dependent biosynthesis of glutamine from glutamate and ammonia. The chain is Glutamine synthetase from Vibrio alginolyticus.